The primary structure comprises 522 residues: Phosphatidylinositol 3,4,5-trisphosphate 3-phosphatase TPTE2 (522 aa).

Positions 1 to 11 are enriched in polar residues; sequence MNESPQTNEFK. The interval 1–28 is disordered; the sequence is MNESPQTNEFKGTTEEAPAKESPHTSEF. Residues 12–27 are compositionally biased toward basic and acidic residues; it reads GTTEEAPAKESPHTSE. The next 3 helical transmembrane spans lie at 66 to 86, 111 to 131, and 146 to 166; these read IVHSIVSSFAFGIFGVFLVLL, ISLAIGLFFLMDVLLRVFVEG, and AIIVIPLLVDVIYIFFDIKLL. The region spanning 210-386 is the Phosphatase tensin-type domain; the sequence is RRYTRDGFDL…GYFAQVKHLY (177 aa). The active-site Phosphocysteine intermediate is the C320. Positions 393-522 constitute a C2 tensin-type domain; the sequence is RRILFIKRFI…FAVEILFGEK (130 aa).

Isoform 3 is expressed in testis, brain and stomach while isoform 4 seems to be testis-specific.

Its subcellular location is the endoplasmic reticulum membrane. The protein resides in the golgi apparatus membrane. It is found in the cytoplasm. The catalysed reaction is a 1,2-diacyl-sn-glycero-3-phospho-(1D-myo-inositol-3,4,5-trisphosphate) + H2O = a 1,2-diacyl-sn-glycero-3-phospho-(1D-myo-inositol-4,5-bisphosphate) + phosphate. Functionally, acts as a lipid phosphatase, removing the phosphate in the D3 position of the inositol ring from phosphatidylinositol 3,4,5-trisphosphate. Its function is as follows. Shows no phosphoinositide phosphatase activity. In Homo sapiens (Human), this protein is Phosphatidylinositol 3,4,5-trisphosphate 3-phosphatase TPTE2 (TPTE2).